The chain runs to 138 residues: ATP synthase epsilon chain (138 aa).

It belongs to the ATPase epsilon chain family. In terms of assembly, F-type ATPases have 2 components, CF(1) - the catalytic core - and CF(0) - the membrane proton channel. CF(1) has five subunits: alpha(3), beta(3), gamma(1), delta(1), epsilon(1). CF(0) has three main subunits: a, b and c.

The protein resides in the cell membrane. Its function is as follows. Produces ATP from ADP in the presence of a proton gradient across the membrane. In Streptococcus equi subsp. zooepidemicus (strain H70), this protein is ATP synthase epsilon chain.